A 253-amino-acid polypeptide reads, in one-letter code: Imidazole glycerol phosphate synthase subunit HisF (253 aa).

Catalysis depends on residues Asp-11 and Asp-130.

Belongs to the HisA/HisF family. Heterodimer of HisH and HisF.

It localises to the cytoplasm. It catalyses the reaction 5-[(5-phospho-1-deoxy-D-ribulos-1-ylimino)methylamino]-1-(5-phospho-beta-D-ribosyl)imidazole-4-carboxamide + L-glutamine = D-erythro-1-(imidazol-4-yl)glycerol 3-phosphate + 5-amino-1-(5-phospho-beta-D-ribosyl)imidazole-4-carboxamide + L-glutamate + H(+). It functions in the pathway amino-acid biosynthesis; L-histidine biosynthesis; L-histidine from 5-phospho-alpha-D-ribose 1-diphosphate: step 5/9. In terms of biological role, IGPS catalyzes the conversion of PRFAR and glutamine to IGP, AICAR and glutamate. The HisF subunit catalyzes the cyclization activity that produces IGP and AICAR from PRFAR using the ammonia provided by the HisH subunit. In Ruegeria sp. (strain TM1040) (Silicibacter sp.), this protein is Imidazole glycerol phosphate synthase subunit HisF.